The primary structure comprises 359 residues: Outer membrane protein assembly factor BamC (359 aa).

A signal peptide spans 1-34; sequence MASLFDKNSFQMTRLQKTAVAKVVGVSLIMLLAA. A lipid anchor (N-palmitoyl cysteine) is attached at Cys-35. Cys-35 carries S-diacylglycerol cysteine lipidation.

Belongs to the BamC family. As to quaternary structure, part of the Bam complex, which is composed of the outer membrane protein BamA, and four lipoproteins BamB, BamC, BamD and BamE.

Its subcellular location is the cell outer membrane. Functionally, part of the outer membrane protein assembly complex, which is involved in assembly and insertion of beta-barrel proteins into the outer membrane. In Rahnella sp. (strain Y9602), this protein is Outer membrane protein assembly factor BamC.